The primary structure comprises 135 residues: Fatty acid-binding protein 5 (135 aa).

Alanine 2 bears the N-acetylalanine mark. Serine 3 is subject to Phosphoserine. A Nuclear localization signal motif is present at residues 24–34; it reads KELGVGLALRK. 1-eicosanoylglycerol contacts are provided by cysteine 43, threonine 56, and arginine 109. Cysteine 120 and cysteine 127 form a disulfide bridge. 129–131 contributes to the 1-eicosanoylglycerol binding site; it reads RVY. 129 to 131 lines the (9Z,12Z)-octadecadienoate pocket; the sequence is RVY. Position 131 (tyrosine 131) interacts with hexadecanoate. Position 131 (tyrosine 131) interacts with N-eicosanoyl ethanolamine. Residue tyrosine 131 is modified to Phosphotyrosine.

Belongs to the calycin superfamily. Fatty-acid binding protein (FABP) family. In terms of assembly, monomer. As to expression, widely expressed.

It is found in the cytoplasm. The protein localises to the nucleus. The protein resides in the synapse. Its subcellular location is the postsynaptic density. It localises to the secreted. The catalysed reaction is hexadecanoate(out) = hexadecanoate(in). The enzyme catalyses (9Z,12Z)-octadecadienoate(out) = (9Z,12Z)-octadecadienoate(in). It catalyses the reaction (9Z)-octadecenoate(out) = (9Z)-octadecenoate(in). Its function is as follows. Intracellular carrier for long-chain fatty acids and related active lipids, such as endocannabinoids, that regulate the metabolism and actions of the ligands they bind. In addition to the cytosolic transport, selectively delivers specific fatty acids from the cytosol to the nucleus, wherein they activate nuclear receptors. Delivers retinoic acid to the nuclear receptor peroxisome proliferator-activated receptor delta; which promotes proliferation and survival. May also serve as a synaptic carrier of endocannabinoid at central synapses and thus controls retrograde endocannabinoid signaling. Modulates inflammation by regulating PTGES induction via NF-kappa-B activation, and prostaglandin E2 (PGE2) biosynthesis during inflammation. May be involved in keratinocyte differentiation. This Mus musculus (Mouse) protein is Fatty acid-binding protein 5.